The chain runs to 305 residues: MILITLEHILTQIYFSFILVITLVFGGTLVYPVNKLSNSVKKGIIFPFFCITLNLIIRWFYSRHLPLSNLYESLMFFSWNFCLIPFFIDIKNPNTQWIGVITAPSALFTHAFATLILPIEMQQSQRLIPALQSHWLIMHVTIIFLGYVTLLCGSLSSIALLAINLEKKLSFFTLYFRKEYSYENKRKAFHPYSFKNFRKSQMIHQIDNLSYYTIVIGFTFLTIGILSGAVWANEAWGSYWSWDPKEIWALITWLIFANYIHIRLNKGWEGNKPALVASLGLFFVWICYFGVNILGIGFHSYGWFL.

Transmembrane regions (helical) follow at residues 13 to 33 (IYFS…VYPV), 42 to 62 (KGII…WFYS), 70 to 90 (LYES…FIDI), 97 to 117 (WIGV…TLIL), 135 to 155 (WLIM…CGSL), 212 to 232 (YTIV…AVWA), 242 to 262 (WDPK…YIHI), and 276 to 296 (VASL…ILGI).

The protein belongs to the CcmF/CycK/Ccl1/NrfE/CcsA family. May interact with Ccs1.

It localises to the plastid. The protein resides in the chloroplast thylakoid membrane. Required during biogenesis of c-type cytochromes (cytochrome c6 and cytochrome f) at the step of heme attachment. The protein is Cytochrome c biogenesis protein CcsA of Welwitschia mirabilis (Tree tumbo).